The chain runs to 441 residues: FBD-associated F-box protein At5g18780 (441 aa).

In terms of domain architecture, F-box spans 10-56 (EDRISILPEPLLCHILSFLRTKDSVRTSVLSSRWRDLWLWVPRLDLD). Positions 366-410 (LPRCLISSLASVDIESPITDKATELKLVSYLLENSTTLKKLVLRL) constitute an FBD domain.

In Arabidopsis thaliana (Mouse-ear cress), this protein is FBD-associated F-box protein At5g18780.